Consider the following 377-residue polypeptide: Homoserine O-acetyltransferase (377 aa).

The AB hydrolase-1 domain occupies 47–355 (NAILICHALT…DYGHDAFLLE (309 aa)). S153 functions as the Nucleophile in the catalytic mechanism. R222 contacts substrate. Catalysis depends on residues D316 and H349. Residue D350 participates in substrate binding.

Belongs to the AB hydrolase superfamily. MetX family. Homodimer.

It localises to the cytoplasm. It carries out the reaction L-homoserine + acetyl-CoA = O-acetyl-L-homoserine + CoA. It functions in the pathway amino-acid biosynthesis; L-methionine biosynthesis via de novo pathway; O-acetyl-L-homoserine from L-homoserine: step 1/1. Its function is as follows. Transfers an acetyl group from acetyl-CoA to L-homoserine, forming acetyl-L-homoserine. The chain is Homoserine O-acetyltransferase from Deferribacter desulfuricans (strain DSM 14783 / JCM 11476 / NBRC 101012 / SSM1).